A 182-amino-acid polypeptide reads, in one-letter code: Transcription termination/antitermination protein NusG (182 aa).

This sequence belongs to the NusG family.

In terms of biological role, participates in transcription elongation, termination and antitermination. The sequence is that of Transcription termination/antitermination protein NusG from Chlamydia muridarum (strain MoPn / Nigg).